Reading from the N-terminus, the 222-residue chain is Coiled-coil domain-containing protein 70 (222 aa).

Coiled-coil stretches lie at residues Leu34–Arg62 and Asn129–Trp188.

The protein is Coiled-coil domain-containing protein 70 (CCDC70) of Bos taurus (Bovine).